The sequence spans 199 residues: NAD(P)H dehydrogenase (quinone) (199 aa).

One can recognise a Flavodoxin-like domain in the interval 4-190; it reads VLVLYHSMYG…AIARFQGKHV (187 aa). FMN-binding positions include 10 to 15 and 79 to 81; these read SMYGHI and TRF. Tyr-12 is a binding site for NAD(+). Trp-99 contacts substrate. An FMN-binding site is contributed by His-134.

This sequence belongs to the WrbA family. FMN serves as cofactor.

The catalysed reaction is a quinone + NADH + H(+) = a quinol + NAD(+). It catalyses the reaction a quinone + NADPH + H(+) = a quinol + NADP(+). This is NAD(P)H dehydrogenase (quinone) from Tolumonas auensis (strain DSM 9187 / NBRC 110442 / TA 4).